Consider the following 91-residue polypeptide: Large ribosomal subunit protein uL23c (91 aa).

Belongs to the universal ribosomal protein uL23 family. In terms of assembly, part of the 50S ribosomal subunit.

It is found in the plastid. The protein resides in the chloroplast. In terms of biological role, binds to 23S rRNA. The polypeptide is Large ribosomal subunit protein uL23c (rpl23) (Pinus thunbergii (Japanese black pine)).